A 264-amino-acid polypeptide reads, in one-letter code: Glutamate racemase (264 aa).

Substrate-binding positions include 9-10 (DS) and 41-42 (YG). The active-site Proton donor/acceptor is the cysteine 72. 73–74 (NT) provides a ligand contact to substrate. Cysteine 183 serves as the catalytic Proton donor/acceptor. 184-185 (TH) lines the substrate pocket.

Belongs to the aspartate/glutamate racemases family.

It carries out the reaction L-glutamate = D-glutamate. It functions in the pathway cell wall biogenesis; peptidoglycan biosynthesis. Its function is as follows. Provides the (R)-glutamate required for cell wall biosynthesis. This Geobacillus sp. (strain WCH70) protein is Glutamate racemase.